The primary structure comprises 229 residues: Urease accessory protein UreG (229 aa).

Gly-24–Thr-31 contributes to the GTP binding site.

The protein belongs to the SIMIBI class G3E GTPase family. UreG subfamily. Homodimer. UreD, UreF and UreG form a complex that acts as a GTP-hydrolysis-dependent molecular chaperone, activating the urease apoprotein by helping to assemble the nickel containing metallocenter of UreC. The UreE protein probably delivers the nickel.

The protein resides in the cytoplasm. In terms of biological role, facilitates the functional incorporation of the urease nickel metallocenter. This process requires GTP hydrolysis, probably effectuated by UreG. This is Urease accessory protein UreG from Albidiferax ferrireducens (strain ATCC BAA-621 / DSM 15236 / T118) (Rhodoferax ferrireducens).